The primary structure comprises 124 residues: Probable glycine cleavage system H protein (124 aa).

Positions Thr-22 to Asp-104 constitute a Lipoyl-binding domain. Residue Lys-63 is modified to N6-lipoyllysine.

The protein belongs to the GcvH family. The glycine cleavage system is composed of four proteins: P, T, L and H. Requires (R)-lipoate as cofactor.

The glycine cleavage system catalyzes the degradation of glycine. The H protein shuttles the methylamine group of glycine from the P protein to the T protein. This is Probable glycine cleavage system H protein from Halobacterium salinarum (strain ATCC 700922 / JCM 11081 / NRC-1) (Halobacterium halobium).